The chain runs to 256 residues: MNLDALQQRLGYRFSKPELLQQALTHRSHSAQHNERLEFLGDSVLNCAVADMLYGMFGKLDEGDLSRVRANLVKQQALYEIAQMLQLSDTLRLGEGELKSGGFRRPSILADALEAIVGAVFLDAGFDAARALIRKLYIPILEQVDPRTLGKDAKTLLQEYLQGHKIALPQYNVIATHGAAHSQQFEVECTVPKLEVRVFGTGASRRAAEQAAAKLALDEVQKLVPQLLKRSRAERTGKTRKQPQPQDPQLSLRLKE.

One can recognise an RNase III domain in the interval 3–125; the sequence is LDALQQRLGY…IVGAVFLDAG (123 aa). E38 contributes to the Mg(2+) binding site. Residue D42 is part of the active site. D111 and E114 together coordinate Mg(2+). The active site involves E114. In terms of domain architecture, DRBM spans 152–222; that stretch reads DAKTLLQEYL…AKLALDEVQK (71 aa). A disordered region spans residues 229-256; sequence KRSRAERTGKTRKQPQPQDPQLSLRLKE.

The protein belongs to the ribonuclease III family. Homodimer. It depends on Mg(2+) as a cofactor.

Its subcellular location is the cytoplasm. The catalysed reaction is Endonucleolytic cleavage to 5'-phosphomonoester.. Its function is as follows. Digests double-stranded RNA. Involved in the processing of primary rRNA transcript to yield the immediate precursors to the large and small rRNAs (23S and 16S). Processes some mRNAs, and tRNAs when they are encoded in the rRNA operon. Processes pre-crRNA and tracrRNA of type II CRISPR loci if present in the organism. In Cupriavidus taiwanensis (strain DSM 17343 / BCRC 17206 / CCUG 44338 / CIP 107171 / LMG 19424 / R1) (Ralstonia taiwanensis (strain LMG 19424)), this protein is Ribonuclease 3.